The primary structure comprises 235 residues: MAELDAANLMKQAVGKAAADRVKSNTIVGLGTGSTTAYALEFIGDRLKKGELENVVGIPTSFQAEVLARKYGIPLTTLDVADRIDIAIDGADEVDPQKNLIKGGGAAHTREKIVDALAETFLVVVDSGKLVDKLGSTFLLPVEVIPMALTPVMRALAKLGGKPELRMGVKKAGPVVTDQGNLVIDVKFDAITNPAELEKTINNLPGVLENGLFVGVADVILVGEIIDGQPTVREF.

Substrate is bound by residues T32 to T35, D89 to D92, and K102 to G105. E111 functions as the Proton acceptor in the catalytic mechanism. K129 is a substrate binding site.

The protein belongs to the ribose 5-phosphate isomerase family. In terms of assembly, homodimer.

The enzyme catalyses aldehydo-D-ribose 5-phosphate = D-ribulose 5-phosphate. The protein operates within carbohydrate degradation; pentose phosphate pathway; D-ribose 5-phosphate from D-ribulose 5-phosphate (non-oxidative stage): step 1/1. In terms of biological role, catalyzes the reversible conversion of ribose-5-phosphate to ribulose 5-phosphate. The polypeptide is Ribose-5-phosphate isomerase A (Synechocystis sp. (strain ATCC 27184 / PCC 6803 / Kazusa)).